Consider the following 323-residue polypeptide: NADH-cytochrome b5 reductase 2 (323 aa).

The chain crosses the membrane as a helical span at residues 32–48 (LAPIYVAVGLTGLGVGL). One can recognise an FAD-binding FR-type domain in the interval 72-177 (QGWVDLKLAQ…KGPIPKYPWE (106 aa)). Residue 180 to 215 (KHKHICLIAGGTGITPMYQLARKIFKDPEDQTKVTL) coordinates FAD.

The protein belongs to the flavoprotein pyridine nucleotide cytochrome reductase family. It depends on FAD as a cofactor.

It localises to the mitochondrion outer membrane. The enzyme catalyses 2 Fe(III)-[cytochrome b5] + NADH = 2 Fe(II)-[cytochrome b5] + NAD(+) + H(+). Functionally, may mediate the reduction of outer membrane cytochrome b5. The protein is NADH-cytochrome b5 reductase 2 (mcr1) of Neosartorya fischeri (strain ATCC 1020 / DSM 3700 / CBS 544.65 / FGSC A1164 / JCM 1740 / NRRL 181 / WB 181) (Aspergillus fischerianus).